A 737-amino-acid polypeptide reads, in one-letter code: tRNA-dihydrouridine(47) synthase [NAD(P)(+)] (737 aa).

Composition is skewed to basic and acidic residues over residues 1-11 (MESQETAKRPI) and 24-33 (PATKRVKLDD). The tract at residues 1 to 127 (MESQETAKRP…GKKKRPKGQN (127 aa)) is disordered. Residues 35 to 44 (PVPQIQEEPS) show a composition bias toward low complexity. Residues 57 to 82 (EDEKPTEQRQDDRDKRRGIAPIKKEY) show a composition bias toward basic and acidic residues. C3H1-type zinc fingers lie at residues 142–166 (CNSV…NALH) and 187–208 (CPVW…VESH). FMN-binding positions include 332–334 (PLT) and Q407. The active-site Proton donor is the C439. Residues K479, H520, 577–579 (NGD), and 601–602 (GR) each bind FMN.

The protein belongs to the Dus family. Dus3 subfamily. FMN serves as cofactor.

It localises to the cytoplasm. Its subcellular location is the nucleus. It carries out the reaction 5,6-dihydrouridine(47) in tRNA + NAD(+) = uridine(47) in tRNA + NADH + H(+). The catalysed reaction is 5,6-dihydrouridine(47) in tRNA + NADP(+) = uridine(47) in tRNA + NADPH + H(+). It catalyses the reaction a 5,6-dihydrouridine in mRNA + NAD(+) = a uridine in mRNA + NADH + H(+). The enzyme catalyses a 5,6-dihydrouridine in mRNA + NADP(+) = a uridine in mRNA + NADPH + H(+). In terms of biological role, catalyzes the synthesis of dihydrouridine, a modified base found in the D-loop of most tRNAs. Specifically modifies U47 in cytoplasmic tRNAs. Catalyzes the synthesis of dihydrouridine in some mRNAs, thereby affecting their translation. The protein is tRNA-dihydrouridine(47) synthase [NAD(P)(+)] (dus-3) of Neurospora crassa (strain ATCC 24698 / 74-OR23-1A / CBS 708.71 / DSM 1257 / FGSC 987).